We begin with the raw amino-acid sequence, 112 residues long: Ciliary microtubule inner protein 3 (112 aa).

A disordered region spans residues 1–34 (MCKDSQKPSVPSHGPKTPSCKGVKAPHSSRPRAW).

This sequence belongs to the CIMIP3-like family.

It is found in the cytoplasm. The protein resides in the cytoskeleton. Its subcellular location is the flagellum axoneme. The protein is Ciliary microtubule inner protein 3 of Homo sapiens (Human).